The primary structure comprises 388 residues: MNLHEYQGKQLFAEYGLPVSKGYAVDSPKEAAEACDKIGGTQWVVKAQVHAGGRGKAGGVKLVRSKDEARAFAQQWLDKRLVTYQTDANGQPVSKILVEACTDIDKELYLGAVVDRASRRIVFMASTEGGVDIEKVAHDTPEKILKATIDPLVGAQPFQARELAFQLGLKGDQVKQFVHIFVGLAQLFQDYDLALLEVNPLVIKTDGNLHCLDAKINIDSNAIYRQPKLRDMADPSQDDPREAHAAKWELNYVALDGNIGCMVNGAGLAMGTMDIVNLHGGAPANFLDVGGGATEERVTEAFKIILSDSNVAAVLVNIFGGIVRCDMIAEGIIGAVREVGVKVPVVVRLEGNNADLGAKMLSESGLNIIGANSLTDAAIQVVKAAEGK.

One can recognise an ATP-grasp domain in the interval 9–244 (KQLFAEYGLP…PSQDDPREAH (236 aa)). ATP-binding positions include K46, 53-55 (GRG), E99, T102, and E107. Residues N199 and D213 each contribute to the Mg(2+) site. Substrate is bound by residues N264 and 321–323 (GIV).

The protein belongs to the succinate/malate CoA ligase beta subunit family. In terms of assembly, heterotetramer of two alpha and two beta subunits. The cofactor is Mg(2+).

The catalysed reaction is succinate + ATP + CoA = succinyl-CoA + ADP + phosphate. The enzyme catalyses GTP + succinate + CoA = succinyl-CoA + GDP + phosphate. Its pathway is carbohydrate metabolism; tricarboxylic acid cycle; succinate from succinyl-CoA (ligase route): step 1/1. Succinyl-CoA synthetase functions in the citric acid cycle (TCA), coupling the hydrolysis of succinyl-CoA to the synthesis of either ATP or GTP and thus represents the only step of substrate-level phosphorylation in the TCA. The beta subunit provides nucleotide specificity of the enzyme and binds the substrate succinate, while the binding sites for coenzyme A and phosphate are found in the alpha subunit. The polypeptide is Succinate--CoA ligase [ADP-forming] subunit beta (Stutzerimonas stutzeri (strain A1501) (Pseudomonas stutzeri)).